The chain runs to 220 residues: Guanylate kinase (220 aa).

Positions 15-194 constitute a Guanylate kinase-like domain; that stretch reads GLMLVISSPS…ALDAVQSIVK (180 aa). Position 22 to 29 (22 to 29) interacts with ATP; sequence SPSGAGKS.

It belongs to the guanylate kinase family.

It localises to the cytoplasm. It carries out the reaction GMP + ATP = GDP + ADP. Essential for recycling GMP and indirectly, cGMP. This is Guanylate kinase from Rhizobium johnstonii (strain DSM 114642 / LMG 32736 / 3841) (Rhizobium leguminosarum bv. viciae).